A 194-amino-acid polypeptide reads, in one-letter code: Type II restriction enzyme OkrAI (194 aa).

Mg(2+)-binding residues include Glu-71, Asp-86, and Trp-100. Catalysis depends on Glu-101, which acts as the Proton acceptor.

In terms of assembly, homodimer. Mg(2+) is required as a cofactor.

It carries out the reaction Endonucleolytic cleavage of DNA to give specific double-stranded fragments with terminal 5'-phosphates.. Functionally, a P subtype restriction enzyme that recognizes the double-stranded sequence 5'-GGATCC-3' and cleaves after G-1. The protein is Type II restriction enzyme OkrAI of Oceanobacter kriegii (Oceanospirillum kriegii).